The sequence spans 150 residues: Holo-[acyl-carrier-protein] synthase (150 aa).

Residues Asp8 and Glu57 each contribute to the Mg(2+) site.

It belongs to the P-Pant transferase superfamily. AcpS family. Mg(2+) is required as a cofactor.

It localises to the cytoplasm. The enzyme catalyses apo-[ACP] + CoA = holo-[ACP] + adenosine 3',5'-bisphosphate + H(+). Functionally, transfers the 4'-phosphopantetheine moiety from coenzyme A to a Ser of acyl-carrier-protein. This chain is Holo-[acyl-carrier-protein] synthase, found in Jannaschia sp. (strain CCS1).